We begin with the raw amino-acid sequence, 379 residues long: Phospho-N-acetylmuramoyl-pentapeptide-transferase (379 aa).

10 consecutive transmembrane segments (helical) span residues 27 to 47, 76 to 96, 100 to 120, 135 to 155, 185 to 205, 218 to 238, 255 to 275, 283 to 303, 307 to 327, and 356 to 376; these read FRTA…GPAV, TMGG…WADL, FVWI…TDDY, AKMG…VLVQ, PHIW…VLVG, GLAI…TYVS, VGEL…FLWY, FMGD…AVII, LLLP…ILQV, and KIIV…LTTL.

The protein belongs to the glycosyltransferase 4 family. MraY subfamily. The cofactor is Mg(2+).

It localises to the cell inner membrane. The catalysed reaction is UDP-N-acetyl-alpha-D-muramoyl-L-alanyl-gamma-D-glutamyl-meso-2,6-diaminopimeloyl-D-alanyl-D-alanine + di-trans,octa-cis-undecaprenyl phosphate = di-trans,octa-cis-undecaprenyl diphospho-N-acetyl-alpha-D-muramoyl-L-alanyl-D-glutamyl-meso-2,6-diaminopimeloyl-D-alanyl-D-alanine + UMP. The protein operates within cell wall biogenesis; peptidoglycan biosynthesis. Its function is as follows. Catalyzes the initial step of the lipid cycle reactions in the biosynthesis of the cell wall peptidoglycan: transfers peptidoglycan precursor phospho-MurNAc-pentapeptide from UDP-MurNAc-pentapeptide onto the lipid carrier undecaprenyl phosphate, yielding undecaprenyl-pyrophosphoryl-MurNAc-pentapeptide, known as lipid I. This is Phospho-N-acetylmuramoyl-pentapeptide-transferase from Koribacter versatilis (strain Ellin345).